A 198-amino-acid polypeptide reads, in one-letter code: Recombination protein RecR (198 aa).

Residues 57-72 form a C4-type zinc finger; sequence CSVCGRLTDDDPCSIC. A Toprim domain is found at 80–175; the sequence is TTILVLEDSR…KVTRLARGLA (96 aa).

This sequence belongs to the RecR family.

Its function is as follows. May play a role in DNA repair. It seems to be involved in an RecBC-independent recombinational process of DNA repair. It may act with RecF and RecO. The sequence is that of Recombination protein RecR from Streptococcus pneumoniae (strain Hungary19A-6).